A 178-amino-acid polypeptide reads, in one-letter code: Ribulose bisphosphate carboxylase small subunit, chloroplastic 4 (178 aa).

The transit peptide at 1-54 (MASISSTVATVSRAAPAQANMVAPFTGLKSNAAFPATKKANDFSTLPSNGGRVQ) directs the protein to the chloroplast.

This sequence belongs to the RuBisCO small chain family. As to quaternary structure, heterohexadecamer of 8 large and 8 small subunits.

It localises to the plastid. The protein localises to the chloroplast. RuBisCO catalyzes two reactions: the carboxylation of D-ribulose 1,5-bisphosphate, the primary event in carbon dioxide fixation, as well as the oxidative fragmentation of the pentose substrate. Both reactions occur simultaneously and in competition at the same active site. Although the small subunit is not catalytic it is essential for maximal activity. This chain is Ribulose bisphosphate carboxylase small subunit, chloroplastic 4, found in Flaveria pringlei.